We begin with the raw amino-acid sequence, 251 residues long: Hydroxyacylglutathione hydrolase (251 aa).

7 residues coordinate Zn(2+): His53, His55, Asp57, His58, His110, Asp127, and His165.

This sequence belongs to the metallo-beta-lactamase superfamily. Glyoxalase II family. Monomer. It depends on Zn(2+) as a cofactor.

It carries out the reaction an S-(2-hydroxyacyl)glutathione + H2O = a 2-hydroxy carboxylate + glutathione + H(+). It participates in secondary metabolite metabolism; methylglyoxal degradation; (R)-lactate from methylglyoxal: step 2/2. Thiolesterase that catalyzes the hydrolysis of S-D-lactoyl-glutathione to form glutathione and D-lactic acid. The polypeptide is Hydroxyacylglutathione hydrolase (Shigella boydii serotype 18 (strain CDC 3083-94 / BS512)).